A 59-amino-acid chain; its full sequence is U-limacoditoxin(3)-Dv33 (59 aa).

Positions 1–19 (MSKVILLCLIFALFACSIS) are cleaved as a signal peptide.

The protein belongs to the limacoditoxin-3 family. In terms of processing, the natural peptide is not amidated. The recombinant peptide is amidated. Expressed by the venom secretory cell of the spine. The spine is a cuticular structure containing a single large nucleated venom-secreting cell at its base. It is an independent unit capable of producing, storing and injecting venom. On the back of D.vulnerans caterpillars, spines are grouped together by 50 to 100 to form scoli, of which there are eight in D.vulnerans.

Its subcellular location is the secreted. Probable toxin. Shows a relatively potent antiparasitic activity against the major pathogenic nematode of ruminants (H.contortus, EC(50)=2.6 uM). Does not show insecticidal and antimicrobial activities. Does not induce increase in intracellular calcium in mouse DRG neurons, suggesting that it does not induce pain. This is U-limacoditoxin(3)-Dv33 from Doratifera vulnerans (Mottled cup moth).